The primary structure comprises 347 residues: Ribosomal RNA large subunit methyltransferase M (347 aa).

S-adenosyl-L-methionine is bound by residues Ser-184, 217–220 (APGG), Asp-236, Asp-256, and Asp-272. The active-site Proton acceptor is Lys-301.

It belongs to the class I-like SAM-binding methyltransferase superfamily. RNA methyltransferase RlmE family. RlmM subfamily. Monomer.

It is found in the cytoplasm. The enzyme catalyses cytidine(2498) in 23S rRNA + S-adenosyl-L-methionine = 2'-O-methylcytidine(2498) in 23S rRNA + S-adenosyl-L-homocysteine + H(+). Its function is as follows. Catalyzes the 2'-O-methylation at nucleotide C2498 in 23S rRNA. The chain is Ribosomal RNA large subunit methyltransferase M from Xanthomonas campestris pv. campestris (strain 8004).